We begin with the raw amino-acid sequence, 201 residues long: CMRF35-like molecule 7 (201 aa).

The signal sequence occupies residues 1–17 (MWLPPALLLLSLSGCFS). Residues 18–120 (IQGPESVRAP…PDLGTQVKVI (103 aa)) form the Ig-like V-type domain. Residues 18 to 151 (IQGPESVRAP…FIGSHKRNHY (134 aa)) lie on the Extracellular side of the membrane. An intrachain disulfide couples Cys36 to Cys104. Residues 152 to 172 (MLLVFVKVPILLILVTAILWL) form a helical membrane-spanning segment. At 173-201 (KGSQRVPEEPGEQPIYMNFSEPLTKDMAT) the chain is on the cytoplasmic side. The residue at position 188 (Tyr188) is a Phosphotyrosine; by FYN.

This sequence belongs to the CD300 family. Interacts with TYROBP, which enhances cell surface expression and activation properties. Interacts with GRB2 in the presence of FYN. In terms of processing, phosphorylation on Tyr-188 by FYN is required for interaction with GRB2. As to expression, expressed exclusively in myeloid lineages.

It localises to the cell membrane. Functionally, acts as an activating immune receptor through its interaction with ITAM-bearing adapter TYROBP, and also independently by recruitment of GRB2. This is CMRF35-like molecule 7 (CD300LB) from Homo sapiens (Human).